A 356-amino-acid chain; its full sequence is 3-dehydroquinate synthase (356 aa).

NAD(+) contacts are provided by residues 71 to 76 (EGEASK), 105 to 109 (GVTGD), 129 to 130 (TS), Lys142, and Lys151. Residues Glu184, His247, and His264 each contribute to the Zn(2+) site.

Belongs to the sugar phosphate cyclases superfamily. Dehydroquinate synthase family. It depends on Co(2+) as a cofactor. Requires Zn(2+) as cofactor. The cofactor is NAD(+).

It localises to the cytoplasm. The enzyme catalyses 7-phospho-2-dehydro-3-deoxy-D-arabino-heptonate = 3-dehydroquinate + phosphate. It participates in metabolic intermediate biosynthesis; chorismate biosynthesis; chorismate from D-erythrose 4-phosphate and phosphoenolpyruvate: step 2/7. Its function is as follows. Catalyzes the conversion of 3-deoxy-D-arabino-heptulosonate 7-phosphate (DAHP) to dehydroquinate (DHQ). This Lactococcus lactis subsp. cremoris (strain MG1363) protein is 3-dehydroquinate synthase.